A 1064-amino-acid polypeptide reads, in one-letter code: mRNA 3'-end-processing protein RNA14 (1064 aa).

Disordered stretches follow at residues 34–106 (ASQS…APSA) and 119–192 (SETP…ASAV). Polar residues predominate over residues 44–54 (AQDQKSHSTLL). 2 stretches are compositionally biased toward low complexity: residues 66 to 86 (SAIP…AIGD) and 151 to 191 (QPAE…AASA). HAT repeat units lie at residues 327–364 (SNFA…YIRR), 377–412 (DVRS…FVAS), 423–456 (AKND…FESS), 673–706 (QRGA…FARR), and 777–811 (NDDN…YEYT). 2 disordered regions span residues 888–985 (AVPT…DRSG) and 1022–1064 (LPGA…SGRY). Basic and acidic residues-rich tracts occupy residues 899-910 (SYKRPAPEDIPP) and 933-948 (RYPE…RYRD). Over residues 1026-1042 (GMPPAPPISRGPPPPPM) the composition is skewed to pro residues.

The protein resides in the nucleus. It is found in the cytoplasm. In terms of biological role, component of the cleavage factor IA (CFIA) complex, which is involved in the endonucleolytic cleavage during polyadenylation-dependent pre-mRNA 3'-end formation. The sequence is that of mRNA 3'-end-processing protein RNA14 (RNA14) from Cryptococcus neoformans var. neoformans serotype D (strain B-3501A) (Filobasidiella neoformans).